The sequence spans 1393 residues: DNA-directed RNA polymerase subunit beta' (1393 aa).

Zn(2+)-binding residues include Cys72, Cys74, Cys87, and Cys90. Mg(2+)-binding residues include Asp463, Asp465, and Asp467. Zn(2+) contacts are provided by Cys812, Cys887, Cys894, and Cys897.

The protein belongs to the RNA polymerase beta' chain family. The RNAP catalytic core consists of 2 alpha, 1 beta, 1 beta' and 1 omega subunit. When a sigma factor is associated with the core the holoenzyme is formed, which can initiate transcription. It depends on Mg(2+) as a cofactor. Zn(2+) is required as a cofactor.

It catalyses the reaction RNA(n) + a ribonucleoside 5'-triphosphate = RNA(n+1) + diphosphate. DNA-dependent RNA polymerase catalyzes the transcription of DNA into RNA using the four ribonucleoside triphosphates as substrates. The polypeptide is DNA-directed RNA polymerase subunit beta' (Chlamydia felis (strain Fe/C-56) (Chlamydophila felis)).